We begin with the raw amino-acid sequence, 436 residues long: Trigger factor (436 aa).

Residues 161 to 246 form the PPIase FKBP-type domain; the sequence is GDQLNIDFVG…VNSVSEAELP (86 aa).

Belongs to the FKBP-type PPIase family. Tig subfamily.

Its subcellular location is the cytoplasm. It catalyses the reaction [protein]-peptidylproline (omega=180) = [protein]-peptidylproline (omega=0). Functionally, involved in protein export. Acts as a chaperone by maintaining the newly synthesized protein in an open conformation. Functions as a peptidyl-prolyl cis-trans isomerase. The chain is Trigger factor from Azotobacter vinelandii (strain DJ / ATCC BAA-1303).